The primary structure comprises 360 residues: Phospho-N-acetylmuramoyl-pentapeptide-transferase (360 aa).

10 helical membrane passes run 25 to 45 (RGIL…PWMI), 73 to 93 (TMGG…WADL), 97 to 117 (YVWV…VDDY), 135 to 155 (FWQS…APSA), 170 to 190 (IPLG…SSNA), 199 to 219 (GLAI…CYLS), 236 to 256 (AGEL…FLWF), 263 to 283 (VFMG…MAVI), 288 to 308 (IVLF…VIQV), and 338 to 358 (VIVR…ATLK).

It belongs to the glycosyltransferase 4 family. MraY subfamily. Mg(2+) is required as a cofactor.

It is found in the cell inner membrane. It catalyses the reaction UDP-N-acetyl-alpha-D-muramoyl-L-alanyl-gamma-D-glutamyl-meso-2,6-diaminopimeloyl-D-alanyl-D-alanine + di-trans,octa-cis-undecaprenyl phosphate = di-trans,octa-cis-undecaprenyl diphospho-N-acetyl-alpha-D-muramoyl-L-alanyl-D-glutamyl-meso-2,6-diaminopimeloyl-D-alanyl-D-alanine + UMP. Its pathway is cell wall biogenesis; peptidoglycan biosynthesis. In terms of biological role, catalyzes the initial step of the lipid cycle reactions in the biosynthesis of the cell wall peptidoglycan: transfers peptidoglycan precursor phospho-MurNAc-pentapeptide from UDP-MurNAc-pentapeptide onto the lipid carrier undecaprenyl phosphate, yielding undecaprenyl-pyrophosphoryl-MurNAc-pentapeptide, known as lipid I. This is Phospho-N-acetylmuramoyl-pentapeptide-transferase from Pseudomonas savastanoi pv. phaseolicola (strain 1448A / Race 6) (Pseudomonas syringae pv. phaseolicola (strain 1448A / Race 6)).